The primary structure comprises 86 residues: Small ribosomal subunit protein bS20 (86 aa).

Residues 1 to 25 (MANIKSQMKRIRTNEAARKRNQSVK) are disordered.

It belongs to the bacterial ribosomal protein bS20 family.

Its function is as follows. Binds directly to 16S ribosomal RNA. The sequence is that of Small ribosomal subunit protein bS20 from Nocardia farcinica (strain IFM 10152).